The sequence spans 60 residues: Protein BNLF2a (60 aa).

Positions 14–26 (SSACGLPGSSTET) are enriched in polar residues. A disordered region spans residues 14 to 34 (SSACGLPGSSTETRPSHPCPE). A helical transmembrane segment spans residues 41-59 (LRLLLVVLCVLFGLLCLLL).

The protein belongs to the lymphocryptovirus BNLF2a family. Interacts with host TAP1 and TAP2.

It localises to the host endoplasmic reticulum membrane. Its function is as follows. Participates in viral evasion from HLA class I-restricted T-cell immunity. Associates with host TAP1 and TAP2 and prevents TAP-mediated peptide transport and subsequent loading. This chain is Protein BNLF2a, found in Homo sapiens (Human).